Here is a 566-residue protein sequence, read N- to C-terminus: 2-isopropylmalate synthase (566 aa).

The Pyruvate carboxyltransferase domain occupies 32–306 (PLWCAVDLRD…DPQIDFSNID (275 aa)). Residues D41, H245, H247, and N281 each contribute to the Mg(2+) site. The regulatory domain stretch occupies residues 451-566 (PVRPLERIKQ…VVSAINRASR (116 aa)).

The protein belongs to the alpha-IPM synthase/homocitrate synthase family. LeuA type 2 subfamily. As to quaternary structure, homodimer. The cofactor is Mg(2+).

It localises to the cytoplasm. It carries out the reaction 3-methyl-2-oxobutanoate + acetyl-CoA + H2O = (2S)-2-isopropylmalate + CoA + H(+). It participates in amino-acid biosynthesis; L-leucine biosynthesis; L-leucine from 3-methyl-2-oxobutanoate: step 1/4. Functionally, catalyzes the condensation of the acetyl group of acetyl-CoA with 3-methyl-2-oxobutanoate (2-ketoisovalerate) to form 3-carboxy-3-hydroxy-4-methylpentanoate (2-isopropylmalate). This is 2-isopropylmalate synthase from Mycobacterium ulcerans (strain Agy99).